The chain runs to 1123 residues: Telomerase reverse transcriptase (1123 aa).

2 disordered regions span residues 191-242 (ENKR…KTTK) and 410-439 (GTTSQSSRRQKADKLPHGSSSSQTGKPKCP). Residues 201–210 (QPPTKRQWLS) are compositionally biased toward polar residues. The Reverse transcriptase domain maps to 596-929 (LVDDAEAESS…PFVRWTGLLI (334 aa)). Residues aspartate 691, aspartate 860, and aspartate 861 each coordinate Mg(2+).

Belongs to the reverse transcriptase family. Telomerase subfamily. In terms of assembly, component of the telomerase ribonucleoprotein complex. Interacts with POT1A.

The protein localises to the nucleus. It is found in the chromosome. It localises to the telomere. It catalyses the reaction DNA(n) + a 2'-deoxyribonucleoside 5'-triphosphate = DNA(n+1) + diphosphate. Functionally, telomerase is a ribonucleoprotein enzyme essential for the replication of chromosome termini in most eukaryotes. It elongates telomeres. It is a reverse transcriptase that adds simple sequence repeats to chromosome ends by copying a template sequence within the RNA component of the enzyme. Required to prevent genome instability induced by breakage-fusion-bridge (BFB) cycles. Can extend completely non-telomeric sequences using RNA template in vitro. The polypeptide is Telomerase reverse transcriptase (TERT) (Arabidopsis thaliana (Mouse-ear cress)).